Here is a 294-residue protein sequence, read N- to C-terminus: Protein farnesyltransferase/geranylgeranyltransferase type-1 subunit alpha (294 aa).

PFTA repeat units lie at residues 57–91 (YSLR…HTPS), 92–125 (YIDN…SLTK), 126–160 (NYER…NFND), 161–194 (YSQE…ETSK), and 199–233 (SLEE…KSGP).

Belongs to the protein prenyltransferase subunit alpha family. As to quaternary structure, heterodimer of an alpha(cwp1) and a beta(cpp1 or cwg2) subunit. The cofactor is Mg(2+).

The enzyme catalyses L-cysteinyl-[protein] + (2E,6E)-farnesyl diphosphate = S-(2E,6E)-farnesyl-L-cysteinyl-[protein] + diphosphate. It carries out the reaction geranylgeranyl diphosphate + L-cysteinyl-[protein] = S-geranylgeranyl-L-cysteinyl-[protein] + diphosphate. Functionally, catalyzes the transfer of a farnesyl or geranyl-geranyl moiety from farnesyl or geranyl-geranyl diphosphate to a cysteine at the fourth position from the C-terminus of several proteins having the C-terminal sequence Cys-aliphatic-aliphatic-X. The alpha(cwp1) subunit is thought to participate in a stable complex with the substrate. The beta(cpp1 or cwg2) subunits bind the peptide substrate. This is Protein farnesyltransferase/geranylgeranyltransferase type-1 subunit alpha (cwp1) from Schizosaccharomyces pombe (strain 972 / ATCC 24843) (Fission yeast).